We begin with the raw amino-acid sequence, 183 residues long: Phosphopantetheine adenylyltransferase (183 aa).

Ser-8 contacts substrate. ATP-binding positions include 8–9 (SF) and His-16. 3 residues coordinate substrate: Lys-40, Thr-72, and Arg-86. Residues 87-89 (GLR), Glu-97, and 122-128 (YSFLSSS) contribute to the ATP site.

Belongs to the bacterial CoaD family. As to quaternary structure, homohexamer. Mg(2+) is required as a cofactor.

Its subcellular location is the cytoplasm. The enzyme catalyses (R)-4'-phosphopantetheine + ATP + H(+) = 3'-dephospho-CoA + diphosphate. It participates in cofactor biosynthesis; coenzyme A biosynthesis; CoA from (R)-pantothenate: step 4/5. Reversibly transfers an adenylyl group from ATP to 4'-phosphopantetheine, yielding dephospho-CoA (dPCoA) and pyrophosphate. The polypeptide is Phosphopantetheine adenylyltransferase (Nostoc punctiforme (strain ATCC 29133 / PCC 73102)).